We begin with the raw amino-acid sequence, 78 residues long: UPF0291 protein ABC2165 (78 aa).

The interval 56–78 is disordered; it reads AKGNDVTPQKLKDSKAQKHKRLH.

Belongs to the UPF0291 family.

It localises to the cytoplasm. In Shouchella clausii (strain KSM-K16) (Alkalihalobacillus clausii), this protein is UPF0291 protein ABC2165.